The chain runs to 31 residues: U6-ctenitoxin-Co1a (31 aa).

2 cysteine pairs are disulfide-bonded: cysteine 2–cysteine 18 and cysteine 9–cysteine 23.

In terms of tissue distribution, expressed by the venom gland.

It localises to the secreted. Functionally, antagonist of L-type calcium channels (Cav1/CACNA1). The sequence is that of U6-ctenitoxin-Co1a from Ctenus ornatus (Brazilian spider).